A 111-amino-acid polypeptide reads, in one-letter code: Urease subunit beta (111 aa).

Belongs to the urease beta subunit family. As to quaternary structure, heterotrimer of UreA (gamma), UreB (beta) and UreC (alpha) subunits. Three heterotrimers associate to form the active enzyme.

The protein resides in the cytoplasm. The catalysed reaction is urea + 2 H2O + H(+) = hydrogencarbonate + 2 NH4(+). Its pathway is nitrogen metabolism; urea degradation; CO(2) and NH(3) from urea (urease route): step 1/1. The chain is Urease subunit beta from Psychrobacter cryohalolentis (strain ATCC BAA-1226 / DSM 17306 / VKM B-2378 / K5).